The chain runs to 105 residues: Ketoisovalerate oxidoreductase subunit VorD (105 aa).

4Fe-4S ferredoxin-type domains are found at residues 44 to 73 and 74 to 103; these read FMPVIDESKCVKCYICWKFCPEPAIYIKED and GFVAIDYDYCKGCGICANECPTKAITMVRE. [4Fe-4S] cluster is bound by residues C53, C56, C59, C63, C83, C86, C89, and C93.

In terms of assembly, heterotetramer of one alpha, one beta, one delta and one gamma chain. The cofactor is [4Fe-4S] cluster.

The catalysed reaction is 3-methyl-2-oxobutanoate + 2 oxidized [2Fe-2S]-[ferredoxin] + CoA = 2-methylpropanoyl-CoA + 2 reduced [2Fe-2S]-[ferredoxin] + CO2 + H(+). In Pyrococcus abyssi (strain GE5 / Orsay), this protein is Ketoisovalerate oxidoreductase subunit VorD (vorD).